The primary structure comprises 539 residues: MTAQEVRLCGLLLQEHFGDVVENVGTHLIRNGVLTLRALAHETKLALDLVKKSLCVLVQHGMCTFGPGRRGPAGPVEYHINCEHILHMLRYPRYIYTAKSLYGDTGELIVEEILQRGQMTMSSTVKTVADRLTHNMPEGQSMDYNEVVSAFSRLVETHFLQRCPPMASAESSGTGSAETPPAVTQPSNPESHPDCYKLPYISLSGHGKRRRSSEDGEADQRAAKKAKTDSSECGDEGIHWQVNFERFHLHFRDQAIISAVSCKLDQTSGEIVRTMLRMSEVTTSANAAFTQALSANEIFRALPSNYNIARPILDQYLTLLVDDPMEFVGKAGDSGGGMFVVNLHRALANLARATLESVVQERFGSRSARIFRLLLRKRHLEQKQVEDFAMIPAKEAKEMLYTLLSENLVQLQEIPKTPDHAPSRTFYLYAVNQLPTARLLLQHCYKTVGNLIERRLYETKENKRLLEKSQRIEAILASLQATGAEATQLTEVEEMITAPERQQLESLRHHINKLDSGENQVDETIFLLESYINSTQASR.

Residues 165–234 (PMASAESSGT…KAKTDSSECG (70 aa)) form a disordered region. The span at 167 to 179 (ASAESSGTGSAET) shows a compositional bias: low complexity. A compositionally biased stretch (basic and acidic residues) spans 212-230 (SSEDGEADQRAAKKAKTDS).

This sequence belongs to the eukaryotic RPC3/POLR3C RNA polymerase subunit family. Component of the RNA polymerase III (Pol III) complex consisting of 17 subunits.

The protein localises to the nucleus. Its function is as follows. DNA-dependent RNA polymerase catalyzes the transcription of DNA into RNA using the four ribonucleoside triphosphates as substrates. Specific core component of RNA polymerase III which synthesizes small RNAs, such as 5S rRNA and tRNAs. This chain is DNA-directed RNA polymerase III subunit RPC3 (polr3c), found in Danio rerio (Zebrafish).